A 38-amino-acid polypeptide reads, in one-letter code: Photosystem II reaction center protein L (38 aa).

A helical membrane pass occupies residues 17–37; it reads SLFWGLLLIFVLAVLFSSYFF.

It belongs to the PsbL family. As to quaternary structure, PSII is composed of 1 copy each of membrane proteins PsbA, PsbB, PsbC, PsbD, PsbE, PsbF, PsbH, PsbI, PsbJ, PsbK, PsbL, PsbM, PsbT, PsbX, PsbY, PsbZ, Psb30/Ycf12, at least 3 peripheral proteins of the oxygen-evolving complex and a large number of cofactors. It forms dimeric complexes.

The protein localises to the plastid. It is found in the chloroplast thylakoid membrane. Functionally, one of the components of the core complex of photosystem II (PSII). PSII is a light-driven water:plastoquinone oxidoreductase that uses light energy to abstract electrons from H(2)O, generating O(2) and a proton gradient subsequently used for ATP formation. It consists of a core antenna complex that captures photons, and an electron transfer chain that converts photonic excitation into a charge separation. This subunit is found at the monomer-monomer interface and is required for correct PSII assembly and/or dimerization. The protein is Photosystem II reaction center protein L of Zygnema circumcarinatum (Green alga).